Here is a 435-residue protein sequence, read N- to C-terminus: Dual specificity protein kinase FUZ7 (435 aa).

The interval 1 to 61 (MLSSGAGSSI…TIGKSSAVTP (61 aa)) is disordered. Residues 46 to 59 (AASNASTIGKSSAV) show a composition bias toward polar residues. Residues 109 to 417 (LKTLSELGAG…PKDLTKHQYV (309 aa)) form the Protein kinase domain. ATP is bound by residues 115-123 (LGAGNGGTV) and Lys138. Residue Asp231 is the Proton acceptor of the active site. The disordered stretch occupies residues 307-359 (NEEDDDSDADNNYTNEDLAGTLSPTKPAPMISLGQNEKQRRRKSKPAGVSLEG).

The protein belongs to the protein kinase superfamily. STE Ser/Thr protein kinase family. MAP kinase kinase subfamily.

It carries out the reaction L-seryl-[protein] + ATP = O-phospho-L-seryl-[protein] + ADP + H(+). The catalysed reaction is L-threonyl-[protein] + ATP = O-phospho-L-threonyl-[protein] + ADP + H(+). It catalyses the reaction L-tyrosyl-[protein] + ATP = O-phospho-L-tyrosyl-[protein] + ADP + H(+). In terms of biological role, protein kinase that is necessary for a-locus-dependent processes, such as conjugation tube formation, filament formation, and maintenance of filamentous growth, and for a-locus-independent processes, such as tumor induction and teliospore germination. In Mycosarcoma maydis (Corn smut fungus), this protein is Dual specificity protein kinase FUZ7 (FUZ7).